A 368-amino-acid polypeptide reads, in one-letter code: Probable endopolygalacturonase A (368 aa).

The signal sequence occupies residues 1-18 (MRSVELLSLAALGSLVAA). Positions 19 to 31 (APAPSRVSDLTKR) are excised as a propeptide. A disulfide bond links cysteine 35 and cysteine 50. 7 PbH1 repeats span residues 140–162 (LEDS…SVQA), 167–192 (LIDI…DISE), 193–214 (STGV…AINS), 215–235 (GENI…SIGS), 244–265 (VKNV…RIKT), 273–295 (VSEV…VIEQ), and 307–352 (TTGV…DITG). Residue aspartate 207 is the Proton donor of the active site. Cysteine 209 and cysteine 225 form a disulfide bridge. Histidine 229 is an active-site residue. Residue asparagine 246 is glycosylated (N-linked (GlcNAc...) asparagine). Disulfide bonds link cysteine 335–cysteine 340 and cysteine 359–cysteine 368.

Belongs to the glycosyl hydrolase 28 family.

It localises to the secreted. The enzyme catalyses (1,4-alpha-D-galacturonosyl)n+m + H2O = (1,4-alpha-D-galacturonosyl)n + (1,4-alpha-D-galacturonosyl)m.. Its function is as follows. Involved in maceration and soft-rotting of plant tissue. Hydrolyzes the 1,4-alpha glycosidic bonds of de-esterified pectate in the smooth region of the plant cell wall. The sequence is that of Probable endopolygalacturonase A (pgaA) from Neosartorya fischeri (strain ATCC 1020 / DSM 3700 / CBS 544.65 / FGSC A1164 / JCM 1740 / NRRL 181 / WB 181) (Aspergillus fischerianus).